Reading from the N-terminus, the 473-residue chain is Cysteine--tRNA ligase (473 aa).

Residue C28 participates in Zn(2+) binding. Positions 30–40 (PTVYNYIHIGN) match the 'HIGH' region motif. Positions 210, 235, and 239 each coordinate Zn(2+). The short motif at 267-271 (KMSKS) is the 'KMSKS' region element. K270 provides a ligand contact to ATP.

The protein belongs to the class-I aminoacyl-tRNA synthetase family. In terms of assembly, monomer. Zn(2+) serves as cofactor.

Its subcellular location is the cytoplasm. The catalysed reaction is tRNA(Cys) + L-cysteine + ATP = L-cysteinyl-tRNA(Cys) + AMP + diphosphate. The chain is Cysteine--tRNA ligase from Fusobacterium nucleatum subsp. nucleatum (strain ATCC 25586 / DSM 15643 / BCRC 10681 / CIP 101130 / JCM 8532 / KCTC 2640 / LMG 13131 / VPI 4355).